We begin with the raw amino-acid sequence, 492 residues long: Steroid 21-hydroxylase (492 aa).

Heme b is bound by residues Arg92 and Lys121. Arg232 provides a ligand contact to 17alpha-hydroxyprogesterone. Arg232 is a progesterone binding site. His364, Arg425, and Cys427 together coordinate heme b.

It belongs to the cytochrome P450 family. It depends on heme b as a cofactor.

It is found in the endoplasmic reticulum membrane. It localises to the microsome membrane. The catalysed reaction is progesterone + reduced [NADPH--hemoprotein reductase] + O2 = 21-hydroxyprogesterone + oxidized [NADPH--hemoprotein reductase] + H2O + H(+). The enzyme catalyses 17alpha-hydroxyprogesterone + reduced [NADPH--hemoprotein reductase] + O2 = 11-deoxycortisol + oxidized [NADPH--hemoprotein reductase] + H2O + H(+). Its function is as follows. A cytochrome P450 monooxygenase that plays a major role in adrenal steroidogenesis. Catalyzes the hydroxylation at C-21 of progesterone and 17alpha-hydroxyprogesterone to respectively form 11-deoxycorticosterone and 11-deoxycortisol, intermediate metabolites in the biosynthetic pathway of mineralocorticoids and glucocorticoids. Mechanistically, uses molecular oxygen inserting one oxygen atom into a substrate, and reducing the second into a water molecule, with two electrons provided by NADPH via cytochrome P450 reductase (CPR; NADPH-ferrihemoprotein reductase). In Sus scrofa (Pig), this protein is Steroid 21-hydroxylase (CYP21).